The following is a 75-amino-acid chain: Large ribosomal subunit protein uL29 (75 aa).

The protein belongs to the universal ribosomal protein uL29 family.

This Ureaplasma urealyticum serovar 10 (strain ATCC 33699 / Western) protein is Large ribosomal subunit protein uL29.